The chain runs to 367 residues: METKLLRTPLYELYDQAGAKTVDFGGWELPVSFSGIKKEHHAVRNAAGLFDVSHMGELLVEGPDALNNLQALVTNDLSKLQDNQAQYNAMCTESGGTVDDLIVYRRNENAYLLVLNAANIQSDIEWIRAHVSGQVTLTDISNETALLAVQGPKALAVLQTLTDEPLSEIRPFRFKENVMFAAIPVLASRTGYTGEDGFELYVKAGDAAELWRAILAAGEPFGLLPCGLGARDTLRFEARLPLYGQELTKDISPIEAGIGFAVKTDKQAAFIGQQALKKQKEQGPSRKLVGIEMVDRGIPRTGYRVFYQGQDVGFVTSGTQSPTLGKNVGLVLAKADAAAIDTELEVEVRGKRLRARVVKTPFYKRTK.

Belongs to the GcvT family. As to quaternary structure, the glycine cleavage system is composed of four proteins: P, T, L and H.

It carries out the reaction N(6)-[(R)-S(8)-aminomethyldihydrolipoyl]-L-lysyl-[protein] + (6S)-5,6,7,8-tetrahydrofolate = N(6)-[(R)-dihydrolipoyl]-L-lysyl-[protein] + (6R)-5,10-methylene-5,6,7,8-tetrahydrofolate + NH4(+). The glycine cleavage system catalyzes the degradation of glycine. The chain is Aminomethyltransferase from Shouchella clausii (strain KSM-K16) (Alkalihalobacillus clausii).